Here is a 621-residue protein sequence, read N- to C-terminus: MALGLEQAEEQRLYQQTLLQDGLKDMLDHGKFLDCVVRAGEREFPCHRLVLAACSPYFRARFLAEPERAGELHLEEVSPDVVAQVLHYLYTSEIALDEASVQDLFAAAHRFQIPSIFTICVSFLQKRLCLSNCLAVFRLGLLLDCARLAVAARDFICAHFTLVARDADFLGLSADELIAIISSDGLNVEKEEAVFEAVMRWAGSGDAEAQAERQRALPTVFESVRCRLLPRAFLESRVERHPLVRAQPELLRKVQMVKDAHEGRITTLRKKKKGKDGAGAKEADKGTSKAKAEEDEEAERILPGILNDTLRFGMFLQDLIFMISEEGAVAYDPAANECYCASLSNQVPKNHVSLVTKENQVFVAGGLFYNEDNKEDPMSAYFLQFDHLDSEWLGMPPLPSPRCLFGLGEALNSIYVVGGREIKDGERCLDSVMCYDRLSFKWGESDPLPYVVYGHTVLSHMDLVYVIGGKGSDRKCLNKMCVYDPKKFEWKELAPMQTARSLFGATVHDGRIIVAAGVTDTGLTSSAEVYSITDNKWAPFEAFPQERSSLSLVSLVGTLYAIGGFATLETESGELVPTELNDIWRYNEEEKKWEGVLREIAYAAGATFLPVRLNVLCLTKM.

Residues 33–98 (LDCVVRAGER…LYTSEIALDE (66 aa)) enclose the BTB domain. A BACK domain is found at 133–239 (CLAVFRLGLL…PRAFLESRVE (107 aa)). The segment at 265 to 295 (ITTLRKKKKGKDGAGAKEADKGTSKAKAEED) is disordered. A compositionally biased stretch (basic and acidic residues) spans 275–292 (KDGAGAKEADKGTSKAKA). Kelch repeat units lie at residues 360-412 (QVFV…EALN), 413-462 (SIYV…SHMD), 463-510 (LVYV…VHDG), 512-557 (IIVA…SLVG), and 559-613 (LYAI…PVRL).

This sequence belongs to the KLHL40 family. In terms of assembly, component of the BCR(KLHL40) E3 ubiquitin ligase complex, at least composed of CUL3, KLHL40 and RBX1. Interacts with LMOD3. Highly expressed in fetal (19, 23 and 31 weeks of gestation) and adult skeletal muscle; expression levels tend to be higher in fetal compared to postnatal muscles (at protein level). Also expressed in fetal and adult heart.

The protein resides in the cytoplasm. It localises to the myofibril. Its subcellular location is the sarcomere. It is found in the a band. The protein localises to the i band. Functionally, substrate-specific adapter of a BCR (BTB-CUL3-RBX1) E3 ubiquitin ligase complex that acts as a key regulator of skeletal muscle development. The BCR(KLHL40) complex acts by mediating ubiquitination and degradation of TFDP1, thereby regulating the activity of the E2F:DP transcription factor complex. Promotes stabilization of LMOD3 by acting as a negative regulator of LMOD3 ubiquitination; the molecular process by which it negatively regulates ubiquitination of LMOD3 is however unclear. This Homo sapiens (Human) protein is Kelch-like protein 40.